A 194-amino-acid chain; its full sequence is Probable GTP-binding protein EngB (194 aa).

In terms of domain architecture, EngB-type G spans 23-194 (LNGEFVFVGR…YELIEIFGGV (172 aa)). GTP is bound by residues 31–38 (GRSNVGKS), 57–61 (GKTAS), 75–78 (DLPG), 143–146 (TKMD), and 173–175 (YSA). Residues S38 and T59 each coordinate Mg(2+).

The protein belongs to the TRAFAC class TrmE-Era-EngA-EngB-Septin-like GTPase superfamily. EngB GTPase family. Mg(2+) is required as a cofactor.

In terms of biological role, necessary for normal cell division and for the maintenance of normal septation. The chain is Probable GTP-binding protein EngB from Thermosipho africanus (strain TCF52B).